A 367-amino-acid chain; its full sequence is 2,6-dihydropseudooxynicotine hydrolase (367 aa).

Residues glutamate 148, serine 217, aspartate 300, and histidine 329 contribute to the active site.

Belongs to the AB hydrolase superfamily. Homodimer.

The catalysed reaction is 2,6-dihydroxypseudooxynicotine + H2O = 2,6-dihydroxypyridine + 4-(methylamino)butanoate + H(+). Its pathway is alkaloid degradation; nicotine degradation; 2,6-dihydroxypyridine and 4-(methylamino)butanoate from 6-hydroxypseudooxynicotine: step 2/2. Its function is as follows. L-nicotine is used as a growth substrate. Plays a role in nicotine catabolism by cleaving a C-C bond in 2,6-dihydroxypseudooxynicotine. In Paenarthrobacter nicotinovorans (Arthrobacter nicotinovorans), this protein is 2,6-dihydropseudooxynicotine hydrolase.